A 37-amino-acid polypeptide reads, in one-letter code: Photosystem I reaction center subunit VIII (37 aa).

Residues 9–29 (SIFVPLVGLVFPAIAMASLFL) form a helical membrane-spanning segment.

Belongs to the PsaI family.

It is found in the plastid. Its subcellular location is the chloroplast thylakoid membrane. May help in the organization of the PsaL subunit. The polypeptide is Photosystem I reaction center subunit VIII (Cucumis sativus (Cucumber)).